A 408-amino-acid chain; its full sequence is Energy-coupling factor transporter ATP-binding protein EcfA1 (408 aa).

The ABC transporter domain occupies 140–374 (IEINHLSFKY…KDFLRNIQLD (235 aa)). Position 174-181 (174-181 (GHNGSGKS)) interacts with ATP.

The protein belongs to the ABC transporter superfamily. Energy-coupling factor EcfA family. In terms of assembly, forms a stable energy-coupling factor (ECF) transporter complex composed of 2 membrane-embedded substrate-binding proteins (S component), 2 ATP-binding proteins (A component) and 2 transmembrane proteins (T component).

It localises to the cell membrane. ATP-binding (A) component of a common energy-coupling factor (ECF) ABC-transporter complex. Unlike classic ABC transporters this ECF transporter provides the energy necessary to transport a number of different substrates. The chain is Energy-coupling factor transporter ATP-binding protein EcfA1 from Mycoplasma mycoides subsp. mycoides SC (strain CCUG 32753 / NCTC 10114 / PG1).